Consider the following 289-residue polypeptide: Xyloglucan endotransglucosylase/hydrolase protein 15 (289 aa).

The N-terminal stretch at 1 to 25 (MGPSSSLTTIVATVLLVTLFGSAYA) is a signal peptide. The GH16 domain maps to 26 to 216 (SNFFDEFDLT…WSKAPFTAYY (191 aa)). Glu102 functions as the Nucleophile in the catalytic mechanism. Catalysis depends on Glu106, which acts as the Proton donor. Glu106 is a binding site for xyloglucan. N-linked (GlcNAc...) asparagine glycosylation occurs at Asn110. Xyloglucan-binding positions include 119–121 (HTN), 129–131 (DRE), 195–196 (DW), and Gly200. Intrachain disulfides connect Cys224–Cys230 and Cys270–Cys284. A xyloglucan-binding site is contributed by Arg275.

The protein belongs to the glycosyl hydrolase 16 family. XTH group 2 subfamily. In terms of processing, contains at least one intrachain disulfide bond essential for its enzymatic activity. Strongly expressed in roots, hypocotyls and cotyledons. Aslo detected in inflorescence stems and in the carpels and styles in flowers.

It localises to the secreted. It is found in the cell wall. Its subcellular location is the extracellular space. The protein localises to the apoplast. The enzyme catalyses breaks a beta-(1-&gt;4) bond in the backbone of a xyloglucan and transfers the xyloglucanyl segment on to O-4 of the non-reducing terminal glucose residue of an acceptor, which can be a xyloglucan or an oligosaccharide of xyloglucan.. It carries out the reaction xyloglucan + H2O = xyloglucan oligosaccharides.. Functionally, catalyzes xyloglucan endohydrolysis (XEH) and/or endotransglycosylation (XET). Cleaves and religates xyloglucan polymers, an essential constituent of the primary cell wall, and thereby participates in cell wall construction of growing tissues. Has a high XET activity, but little or no XEH activity in vitro. Acceptor preferences are XXXGol &gt; XLLGol = XLFGol &gt; XXLGol &gt; XXFGol. In Arabidopsis thaliana (Mouse-ear cress), this protein is Xyloglucan endotransglucosylase/hydrolase protein 15.